Here is a 116-residue protein sequence, read N- to C-terminus: Large ribosomal subunit protein bL17 (116 aa).

It belongs to the bacterial ribosomal protein bL17 family. In terms of assembly, part of the 50S ribosomal subunit. Contacts protein L32.

The protein is Large ribosomal subunit protein bL17 of Wolinella succinogenes (strain ATCC 29543 / DSM 1740 / CCUG 13145 / JCM 31913 / LMG 7466 / NCTC 11488 / FDC 602W) (Vibrio succinogenes).